Here is a 371-residue protein sequence, read N- to C-terminus: Putative glutamate--cysteine ligase 2 (371 aa).

Belongs to the glutamate--cysteine ligase type 2 family. YbdK subfamily.

The enzyme catalyses L-cysteine + L-glutamate + ATP = gamma-L-glutamyl-L-cysteine + ADP + phosphate + H(+). Functionally, ATP-dependent carboxylate-amine ligase which exhibits weak glutamate--cysteine ligase activity. This Burkholderia ambifaria (strain MC40-6) protein is Putative glutamate--cysteine ligase 2.